The following is a 490-amino-acid chain: Protein lag-3 (490 aa).

5 disordered regions span residues 18–55 (PSVAGMKPSTSKTTHSPPPEEPTAPFVNDNLPNPEDEP), 105–155 (EDEE…PTSE), 213–235 (SSADSIRSVPTPASSMHQPSPAE), 307–362 (SSSE…MQRI), and 391–490 (QQQQ…ANIN). Residues 105–119 (EDEERKRVEQQKNKE) are compositionally biased toward basic and acidic residues. Over residues 122–138 (NASTSAPTSSRNGGQSV) the composition is skewed to polar residues. The segment covering 307 to 318 (SSSESPTKQSPM) has biased composition (polar residues). Low complexity-rich tracts occupy residues 341–359 (QLQQQQNKMRLMQQQQQEM), 391–404 (QQQQQQQMQQHHQM), and 413–456 (QAHQ…HHQM).

In terms of assembly, component of a complex consisting of at least a lin-12/Notch intracellular domain (NICD), lag-1, and lag-3. Interacts with a NICD of lin-12/Notch or glp-1/Notch; the interactions are direct. As to expression, expressed in the progenitor zone and the early pachytene region of the hermaphrodite gonad.

It is found in the nucleus. Its function is as follows. glp-1/Notch and lin-12/Notch proteins promote signaling by recruiting lag-3 to target promoters, where it functions as a transcriptional activator, probably as part of a complex with a Notch intracellular domain (NICD) and the transcription regulator lag-1. Involved in the p53-mediated germ-cell apoptotic response to DNA damage, perhaps acting as a transcriptional activator. May regulate phosphatase lip-1 mRNA transcription downstream of glp-1. This chain is Protein lag-3 (sel-8), found in Caenorhabditis elegans.